The following is a 290-amino-acid chain: 4-hydroxy-tetrahydrodipicolinate synthase (290 aa).

Threonine 44 is a binding site for pyruvate. Residue tyrosine 132 is the Proton donor/acceptor of the active site. The active-site Schiff-base intermediate with substrate is the lysine 160. Residue isoleucine 202 participates in pyruvate binding.

The protein belongs to the DapA family. As to quaternary structure, homotetramer; dimer of dimers.

It is found in the cytoplasm. It catalyses the reaction L-aspartate 4-semialdehyde + pyruvate = (2S,4S)-4-hydroxy-2,3,4,5-tetrahydrodipicolinate + H2O + H(+). It participates in amino-acid biosynthesis; L-lysine biosynthesis via DAP pathway; (S)-tetrahydrodipicolinate from L-aspartate: step 3/4. In terms of biological role, catalyzes the condensation of (S)-aspartate-beta-semialdehyde [(S)-ASA] and pyruvate to 4-hydroxy-tetrahydrodipicolinate (HTPA). In Citrifermentans bemidjiense (strain ATCC BAA-1014 / DSM 16622 / JCM 12645 / Bem) (Geobacter bemidjiensis), this protein is 4-hydroxy-tetrahydrodipicolinate synthase.